The chain runs to 355 residues: Probable butyrate kinase (355 aa).

This sequence belongs to the acetokinase family.

Its subcellular location is the cytoplasm. It carries out the reaction butanoate + ATP = butanoyl phosphate + ADP. This Listeria monocytogenes serovar 1/2a (strain ATCC BAA-679 / EGD-e) protein is Probable butyrate kinase.